A 618-amino-acid polypeptide reads, in one-letter code: Pyocin-S1 (618 aa).

Belongs to the colicin/pyosin nuclease family. Purified pyocin S1 makes up a complex of the two (large and small) proteins. The large protein, but not the pyocin complex, shows in vitro DNase activity.

In terms of biological role, causes breakdown of chromosomal DNA as well as complete inhibition of lipid synthesis in sensitive cells. The chain is Pyocin-S1 (pys1) from Pseudomonas aeruginosa.